The following is a 207-amino-acid chain: High frequency lysogenization protein HflD homolog (207 aa).

The protein belongs to the HflD family.

The protein resides in the cytoplasm. The protein localises to the cell inner membrane. This chain is High frequency lysogenization protein HflD homolog, found in Azotobacter vinelandii (strain DJ / ATCC BAA-1303).